A 503-amino-acid chain; its full sequence is ESX-5 secretion system protein EccD5 (503 aa).

Transmembrane regions (helical) follow at residues 137–157, 169–189, 200–220, 224–244, 250–270, 272–292, 359–379, 414–434, 443–463, and 480–500; these read VVAVQVGAGMVGTGVILASGV, LTTIFASVIAVLVLMVAMMLL, VADIMLVSGLAPLTVAAASAP, VGSPQAVLGFGVLSIAAALAL, RLAIYTAIVTICGLTTLASLS, MVAATSAVTLFATMLLICVVM, FLSGLLVGLGVLMVVSLTSLC, ITLAVTAVIVVAAVSVRYALV, IVASLLVLLPAAGMTAAAVVP, and YLCLMPIFPLAFWLMNVYAAI.

This sequence belongs to the EccD/Snm4 family. In terms of assembly, part of the ESX-5 / type VII secretion system (T7SS), which is composed of cytosolic and membrane components. The ESX-5 membrane complex is composed of EccB5, EccC5, EccD5 and EccE5.

It is found in the cell inner membrane. In terms of biological role, part of the ESX-5 specialized secretion system, which is responsible for the secretion of EsxN and a number of PE_PGRS and PPE proteins. This component is essential for ESX-5 complex stability and secretion. In Mycobacterium marinum (strain ATCC BAA-535 / M), this protein is ESX-5 secretion system protein EccD5.